The primary structure comprises 81 residues: Cytotoxin 1c (81 aa).

The N-terminal stretch at Met-1–Thr-21 is a signal peptide. 4 cysteine pairs are disulfide-bonded: Cys-24–Cys-42, Cys-35–Cys-59, Cys-63–Cys-74, and Cys-75–Cys-80.

It belongs to the three-finger toxin family. Short-chain subfamily. Type IA cytotoxin sub-subfamily. In terms of assembly, monomer in solution; Homodimer and oligomer in the presence of negatively charged lipids forming a pore with a size ranging between 20 and 30 Angstroms. Expressed by the venom gland.

The protein resides in the secreted. Its subcellular location is the target cell membrane. Its function is as follows. Shows cytolytic activity on many different cells by forming pore in lipid membranes. In vivo, increases heart rate or kills the animal by cardiac arrest. In addition, it binds to heparin with high affinity, interacts with Kv channel-interacting protein 1 (KCNIP1) in a calcium-independent manner, and binds to integrin alpha-V/beta-3 (ITGAV/ITGB3) with moderate affinity. The polypeptide is Cytotoxin 1c (Naja atra (Chinese cobra)).